The primary structure comprises 92 residues: DNA-directed RNA polymerase subunit Rpo11 (92 aa).

Belongs to the archaeal Rpo11/eukaryotic RPB11/RPC19 RNA polymerase subunit family. In terms of assembly, part of the RNA polymerase complex.

Its subcellular location is the cytoplasm. It carries out the reaction RNA(n) + a ribonucleoside 5'-triphosphate = RNA(n+1) + diphosphate. Functionally, DNA-dependent RNA polymerase (RNAP) catalyzes the transcription of DNA into RNA using the four ribonucleoside triphosphates as substrates. This chain is DNA-directed RNA polymerase subunit Rpo11, found in Methanosarcina acetivorans (strain ATCC 35395 / DSM 2834 / JCM 12185 / C2A).